The primary structure comprises 717 residues: MSQEKQVFSIDLAGRQLTIETSQLAKQANGAVLVRYGDTAVLSTATASKEPKNVDFFPLTVNYEERLYAVGKIPGGFIKREGRPSEKAILASRLIDRPIRPLFADGFRNEVQVVSIVMSVDQDCSSEMAAMLGSSLALSISDIPFEGPIAGATVGRINGEFVINPTVEQQEQSDMHLVVAGTKDAINMVEAGADQVPEETMLEAIMFGHDEIKRLIAFQEEIVQAVGKEKTAVKLYEVDADLNQAVREMAETDMHSAIQVHEKHAREDAISVVKKRVIEHYEAEEADADTLGQVSEILYKIVKEEVRRLITVEKIRPDGRKGDEIRPLASEVGILSRTHGSGLFTRGQTQALSICTLGALGDVQILDGLGVEESKRFMHHYNFPSFSVGETRPMRGPGRREIGHGALGERALEPVLPSEKDFPYTVRLVSEVLESNGSTSQASICGSTLAMMDAGVPLKAPVAGIAMGLVKSGEHYTILTDIQGMEDHLGDMDFKVAGTAKGVTALQMDIKIDGLSREILEEALQQAKVGRMHILNHMLSVIAEPRIELSAYAPKIITMAINPDKIRDVIGPSGKQINKIIEETGVKIDIEQDGTVFISSINQEMNEKAKKIIEDIVREVQVGEIYLGKVKRVEKFGAFVELFSGKDGLVHISELALERVGKVEDVVKIGDEISVKVIEIDKQGRVNLSRKVLLKEEQEKEAAKEEAAKEENAQEQQ.

Mg(2+) is bound by residues Asp-487 and Asp-493. The region spanning Pro-554 to Ile-613 is the KH domain. An S1 motif domain is found at Gly-623 to Lys-691.

Belongs to the polyribonucleotide nucleotidyltransferase family. Requires Mg(2+) as cofactor.

It localises to the cytoplasm. The catalysed reaction is RNA(n+1) + phosphate = RNA(n) + a ribonucleoside 5'-diphosphate. In terms of biological role, involved in mRNA degradation. Catalyzes the phosphorolysis of single-stranded polyribonucleotides processively in the 3'- to 5'-direction. The chain is Polyribonucleotide nucleotidyltransferase from Bacillus mycoides (strain KBAB4) (Bacillus weihenstephanensis).